The primary structure comprises 475 residues: Tesmin (475 aa).

Phosphoserine occurs at positions 34 and 67. The CRC domain maps to 263–372 (SGPALQGPPK…KCIACKNYEE (110 aa)).

This sequence belongs to the lin-54 family.

It localises to the cytoplasm. The protein localises to the nucleus. In terms of biological role, may have a role in spermatogenesis. The sequence is that of Tesmin from Rattus norvegicus (Rat).